A 547-amino-acid polypeptide reads, in one-letter code: uncharacterized protein (547 aa).

A compositionally biased stretch (polar residues) spans 1 to 18 (MEYHPSSQSPQVNPGMES). Disordered regions lie at residues 1–41 (MEYH…LQHP) and 80–165 (PSYP…VKRQ). Low complexity-rich tracts occupy residues 19-29 (QQGGYTYTYQQ) and 83-94 (PQSSSAPSNNSY). Positions 121 to 135 (VPSPSPIEMVPPSPP) are enriched in pro residues. Over residues 136 to 160 (KTGSNNSAPVTGKTVQSGNALNNSG) the composition is skewed to polar residues. Residues 174–201 (CLTCRKRRIKCDERKPICYNCIKSKRQC) constitute a DNA-binding region (zn(2)-C6 fungal-type).

Its subcellular location is the nucleus. This is an uncharacterized protein from Schizosaccharomyces pombe (strain 972 / ATCC 24843) (Fission yeast).